The chain runs to 401 residues: Phosphoglycerate kinase (401 aa).

Residues 21–23 (DLN), Arg37, 60–63 (HLGR), Arg119, and Arg152 each bind substrate. ATP contacts are provided by residues Lys203, Glu325, and 351–354 (GGDT).

It belongs to the phosphoglycerate kinase family. In terms of assembly, monomer.

Its subcellular location is the cytoplasm. It carries out the reaction (2R)-3-phosphoglycerate + ATP = (2R)-3-phospho-glyceroyl phosphate + ADP. It functions in the pathway carbohydrate degradation; glycolysis; pyruvate from D-glyceraldehyde 3-phosphate: step 2/5. The protein is Phosphoglycerate kinase of Acidithiobacillus ferrooxidans (strain ATCC 23270 / DSM 14882 / CIP 104768 / NCIMB 8455) (Ferrobacillus ferrooxidans (strain ATCC 23270)).